The primary structure comprises 472 residues: GTPase Der (472 aa).

EngA-type G domains are found at residues 3 to 166 (AVIA…PPAE) and 178 to 351 (IPVA…AAAH). Residues 9 to 16 (GRPNVGKS), 56 to 60 (DTGGM), 118 to 121 (NKTD), 184 to 191 (GRPNVGKS), 231 to 235 (DTAGV), and 296 to 299 (NKWD) each bind GTP. Residues 352–436 (RDLATPELND…PVRIECRASD (85 aa)) enclose the KH-like domain. The segment at 434 to 472 (ASDNPFADKPNQLTERQRRRRQRVIHHAKKREKKRKRRR) is disordered. Positions 450–472 (QRRRRQRVIHHAKKREKKRKRRR) are enriched in basic residues.

Belongs to the TRAFAC class TrmE-Era-EngA-EngB-Septin-like GTPase superfamily. EngA (Der) GTPase family. Associates with the 50S ribosomal subunit.

Functionally, GTPase that plays an essential role in the late steps of ribosome biogenesis. The polypeptide is GTPase Der (Halorhodospira halophila (strain DSM 244 / SL1) (Ectothiorhodospira halophila (strain DSM 244 / SL1))).